The sequence spans 810 residues: E3 ubiquitin-protein ligase RNF10 (810 aa).

The segment covering 1-31 (MPQSSPSAAATASDMDKNSGSSSSSASSGSS) has biased composition (low complexity). Residues 1-119 (MPQSSPSAAA…SFNGGRRDEV (119 aa)) form a disordered region. Ser-5 is subject to Phosphoserine. Over residues 76-92 (NFINQSRRSNSQKSKTF) the composition is skewed to polar residues. Positions 101–185 (GGSSKLFSSS…FNKELFLQAN (85 aa)) are interaction with MEOX2. Low complexity predominate over residues 104 to 113 (SKLFSSSFNG). Ser-110 and Ser-128 each carry phosphoserine. The RING-type zinc-finger motif lies at 225-267 (CPICLYPPTAAKITRCGHIFCWACILHYLSLSEKTWSKCPICY). Disordered regions lie at residues 598-623 (KRKRQRQKKAREERRRERRIEMEENK), 652-674 (DSALGSTSTEGRGALSLSPLSRS), 722-759 (ADVWPKTAPKKDENTLGPPAPVDSDGESDNSDRVPVPS), and 775-810 (LDTPVTSDPLSEEKGGKKRKKQKQKLLFSTSVVHTK). Residues 607 to 623 (AREERRRERRIEMEENK) are compositionally biased toward basic and acidic residues. Residues 652 to 661 (DSALGSTSTE) show a composition bias toward polar residues. The segment covering 662-674 (GRGALSLSPLSRS) has biased composition (low complexity). Residues 722-735 (ADVWPKTAPKKDEN) show a composition bias toward basic and acidic residues. The span at 801–810 (LFSTSVVHTK) shows a compositional bias: polar residues.

Belongs to the RNF10 family. As to quaternary structure, interacts with MEOX2.

It is found in the cytoplasm. The protein localises to the nucleus. It carries out the reaction S-ubiquitinyl-[E2 ubiquitin-conjugating enzyme]-L-cysteine + [acceptor protein]-L-lysine = [E2 ubiquitin-conjugating enzyme]-L-cysteine + N(6)-ubiquitinyl-[acceptor protein]-L-lysine.. It participates in protein modification; protein ubiquitination. Its function is as follows. E3 ubiquitin-protein ligase that catalyzes monoubiquitination of 40S ribosomal proteins RPS2/us5 and RPS3/us3 in response to ribosome stalling. Part of a ribosome quality control that takes place when ribosomes have stalled during translation initiation (iRQC): RNF10 acts by mediating monoubiquitination of RPS2/us5 and RPS3/us3, promoting their degradation by the proteasome. Also promotes ubiquitination of 40S ribosomal proteins in response to ribosome stalling during translation elongation. The action of RNF10 in iRQC is counteracted by USP10. May also act as a transcriptional factor involved in the regulation of MAG (Myelin-associated glycoprotein) expression. Acts as a regulator of Schwann cell differentiation and myelination. This chain is E3 ubiquitin-protein ligase RNF10 (RNF10), found in Bos taurus (Bovine).